The primary structure comprises 700 residues: Putative glutamine-dependent NAD(+) synthetase (700 aa).

Positions 5-275 (VTIASCQLNQ…VEVISATVDV (271 aa)) constitute a CN hydrolase domain. Glutamate 45 acts as the Proton acceptor; for glutaminase activity in catalysis. The For glutaminase activity role is filled by lysine 114. Residue cysteine 175 is the Nucleophile; for glutaminase activity of the active site. Residues 327–700 (IPLPEEEITF…ASKFEQHQRK (374 aa)) are ligase. Residue 357 to 364 (PLSGGLDS) participates in ATP binding. Residue serine 359 is part of the active site.

In the C-terminal section; belongs to the NAD synthetase family.

The catalysed reaction is deamido-NAD(+) + L-glutamine + ATP + H2O = L-glutamate + AMP + diphosphate + NAD(+) + H(+). It participates in cofactor biosynthesis; NAD(+) biosynthesis; NAD(+) from deamido-NAD(+) (L-Gln route): step 1/1. The polypeptide is Putative glutamine-dependent NAD(+) synthetase (Schizosaccharomyces pombe (strain 972 / ATCC 24843) (Fission yeast)).